Reading from the N-terminus, the 49-residue chain is uncharacterized protein (49 aa).

This is an uncharacterized protein from Treponema pallidum (strain Nichols).